A 292-amino-acid chain; its full sequence is 33 kDa chaperonin (292 aa).

2 cysteine pairs are disulfide-bonded: Cys-230–Cys-232 and Cys-263–Cys-266.

This sequence belongs to the HSP33 family. Under oxidizing conditions two disulfide bonds are formed involving the reactive cysteines. Under reducing conditions zinc is bound to the reactive cysteines and the protein is inactive.

The protein resides in the cytoplasm. Redox regulated molecular chaperone. Protects both thermally unfolding and oxidatively damaged proteins from irreversible aggregation. Plays an important role in the bacterial defense system toward oxidative stress. The sequence is that of 33 kDa chaperonin from Cronobacter sakazakii (strain ATCC BAA-894) (Enterobacter sakazakii).